A 192-amino-acid chain; its full sequence is Bifunctional protein PyrR (192 aa).

Residues 49 to 50 (SG), arginine 90, 111 to 119 (DDVLFSGRT), arginine 144, and valine 168 contribute to the substrate site. The PRPP-binding signature appears at 107–119 (VILVDDVLFSGRT).

It belongs to the purine/pyrimidine phosphoribosyltransferase family. PyrR subfamily.

It catalyses the reaction UMP + diphosphate = 5-phospho-alpha-D-ribose 1-diphosphate + uracil. Functionally, regulates the transcription of the pyrimidine nucleotide (pyr) operon in response to exogenous pyrimidines. Its function is as follows. Also displays a weak uracil phosphoribosyltransferase activity which is not physiologically significant. This Corynebacterium glutamicum (strain ATCC 13032 / DSM 20300 / JCM 1318 / BCRC 11384 / CCUG 27702 / LMG 3730 / NBRC 12168 / NCIMB 10025 / NRRL B-2784 / 534) protein is Bifunctional protein PyrR.